The following is a 365-amino-acid chain: Alanine racemase (365 aa).

Lys-32 acts as the Proton acceptor; specific for D-alanine in catalysis. An N6-(pyridoxal phosphate)lysine modification is found at Lys-32. Arg-128 contributes to the substrate binding site. Tyr-257 acts as the Proton acceptor; specific for L-alanine in catalysis. Met-305 lines the substrate pocket.

It belongs to the alanine racemase family. It depends on pyridoxal 5'-phosphate as a cofactor.

It carries out the reaction L-alanine = D-alanine. It participates in amino-acid biosynthesis; D-alanine biosynthesis; D-alanine from L-alanine: step 1/1. Catalyzes the interconversion of L-alanine and D-alanine. May also act on other amino acids. The protein is Alanine racemase (alr) of Francisella tularensis subsp. mediasiatica (strain FSC147).